The chain runs to 343 residues: Probable dual-specificity RNA methyltransferase RlmN (343 aa).

E92 (proton acceptor) is an active-site residue. The Radical SAM core domain maps to 98 to 328; the sequence is YHHGLTACIS…TTVRREMGAD (231 aa). A disulfide bridge links C105 with C333. Residues C112, C116, and C119 each coordinate [4Fe-4S] cluster. Residues 159–160, S191, 214–216, and N290 contribute to the S-adenosyl-L-methionine site; these read GE and SLH. C333 acts as the S-methylcysteine intermediate in catalysis.

The protein belongs to the radical SAM superfamily. RlmN family. [4Fe-4S] cluster is required as a cofactor.

The protein localises to the cytoplasm. It carries out the reaction adenosine(2503) in 23S rRNA + 2 reduced [2Fe-2S]-[ferredoxin] + 2 S-adenosyl-L-methionine = 2-methyladenosine(2503) in 23S rRNA + 5'-deoxyadenosine + L-methionine + 2 oxidized [2Fe-2S]-[ferredoxin] + S-adenosyl-L-homocysteine. The enzyme catalyses adenosine(37) in tRNA + 2 reduced [2Fe-2S]-[ferredoxin] + 2 S-adenosyl-L-methionine = 2-methyladenosine(37) in tRNA + 5'-deoxyadenosine + L-methionine + 2 oxidized [2Fe-2S]-[ferredoxin] + S-adenosyl-L-homocysteine. Specifically methylates position 2 of adenine 2503 in 23S rRNA and position 2 of adenine 37 in tRNAs. The sequence is that of Probable dual-specificity RNA methyltransferase RlmN from Alkaliphilus oremlandii (strain OhILAs) (Clostridium oremlandii (strain OhILAs)).